A 371-amino-acid chain; its full sequence is MSKKDYYEILGIAKNANEQDIKDAYKRLAKKYHPDRNKDKDAETKFKEMKEAYEVLSDQQKRAAYDQHGHTAFEQSGMGGGFHNSSNFSNVFNDVFSDFFGGHQQRTQRGRDLRYTLNLTLEEAVRGASKEIHITTLVHCEHCKGSGAKQGTRPVTCTTCRGVGEVHMQQGFFTIQQTCPRCHGQGQMIKDPCRQCRGQGKVEEPKTFSVKVPAGIDSNDCLRLNGKGEVGEMGAPSGDLYVQIHVDRHHIFERSKNNLYCKVPINFTTAALGGEIEVPTLDGAIKLKIPPETQTGQCFRIPNKGIKPEKKTPGDLFCTVFIETPVHLNEKQKKLLRDLDQSFCETSSKKNTPETKKFLESMKKFFDNLTH.

The J domain occupies 5–69 (DYYEILGIAK…QKRAAYDQHG (65 aa)). The segment at 127–205 (GASKEIHITT…CRGQGKVEEP (79 aa)) adopts a CR-type zinc-finger fold. 8 residues coordinate Zn(2+): cysteine 140, cysteine 143, cysteine 157, cysteine 160, cysteine 179, cysteine 182, cysteine 193, and cysteine 196. 4 CXXCXGXG motif repeats span residues 140-147 (CEHCKGSG), 157-164 (CTTCRGVG), 179-186 (CPRCHGQG), and 193-200 (CRQCRGQG).

It belongs to the DnaJ family. As to quaternary structure, homodimer. It depends on Zn(2+) as a cofactor.

The protein localises to the cytoplasm. Participates actively in the response to hyperosmotic and heat shock by preventing the aggregation of stress-denatured proteins and by disaggregating proteins, also in an autonomous, DnaK-independent fashion. Unfolded proteins bind initially to DnaJ; upon interaction with the DnaJ-bound protein, DnaK hydrolyzes its bound ATP, resulting in the formation of a stable complex. GrpE releases ADP from DnaK; ATP binding to DnaK triggers the release of the substrate protein, thus completing the reaction cycle. Several rounds of ATP-dependent interactions between DnaJ, DnaK and GrpE are required for fully efficient folding. Also involved, together with DnaK and GrpE, in the DNA replication of plasmids through activation of initiation proteins. In Hamiltonella defensa subsp. Acyrthosiphon pisum (strain 5AT), this protein is Chaperone protein DnaJ.